A 217-amino-acid polypeptide reads, in one-letter code: Guanylate kinase (217 aa).

A Guanylate kinase-like domain is found at 15–194 (GLMLVLSSPS…AYQRLKRILL (180 aa)). 22-29 (SPSGAGKT) serves as a coordination point for ATP.

This sequence belongs to the guanylate kinase family.

It localises to the cytoplasm. It catalyses the reaction GMP + ATP = GDP + ADP. Functionally, essential for recycling GMP and indirectly, cGMP. This chain is Guanylate kinase, found in Hyphomonas neptunium (strain ATCC 15444).